Reading from the N-terminus, the 421-residue chain is Phosphatidylinositol 5-phosphate 4-kinase type-2 gamma (421 aa).

Ala-2 carries the post-translational modification N-acetylalanine. Ser-26 carries the phosphoserine modification. The 378-residue stretch at 43-420 (AADPLVGVFL…RFLDFIANIF (378 aa)) folds into the PIPK domain. Residues 69–75 (VMLLPDD) are required for interaction with PIP5K1A. Ser-349 is modified (phosphoserine).

Interacts with PIP5K1A; the interaction inhibits PIP5K1A kinase activity. Post-translationally, phosphorylated, phosphorylation is induced by EGF.

The protein resides in the endoplasmic reticulum. It is found in the cytoplasm. It catalyses the reaction a 1,2-diacyl-sn-glycero-3-phospho-(1D-myo-inositol-5-phosphate) + ATP = a 1,2-diacyl-sn-glycero-3-phospho-(1D-myo-inositol-4,5-bisphosphate) + ADP + H(+). It carries out the reaction 1,2-dihexadecanoyl-sn-glycero-3-phospho-(1D-myo-inositol-5-phosphate) + ATP = 1,2-dihexadecanoyl-sn-glycero-3-phospho-(1D-myo-inositol-4,5-bisphosphate) + ADP + H(+). The catalysed reaction is 1,2-dihexadecanoyl-sn-glycero-3-phospho-(1D-myo-inositol-5-phosphate) + GTP = 1,2-dihexadecanoyl-sn-glycero-3-phospho-(1D-myo-inositol-4,5-bisphosphate) + GDP + H(+). Functionally, phosphatidylinositol 5-phosphate 4-kinase with low enzymatic activity. May be a GTP sensor, has higher GTP-dependent kinase activity than ATP-dependent kinase activity. PIP4Ks negatively regulate insulin signaling through a catalytic-independent mechanism. They interact with PIP5Ks and suppress PIP5K-mediated PtdIns(4,5)P2 synthesis and insulin-dependent conversion to PtdIns(3,4,5)P3. The sequence is that of Phosphatidylinositol 5-phosphate 4-kinase type-2 gamma from Mus musculus (Mouse).